Here is a 207-residue protein sequence, read N- to C-terminus: MLILSGQGNPGAKYAKNRHNAGFLVIDRIHDAYGFGPWRTKFDAEISEGTVETANGRQRVLLIKPQTFYNETGRSVSKAVTFYKLQPEDVTVFHDEIDLAPGRLRVKRGGGHSGNNGARSMMAHLGENFRRIRIGVGHPGDKAMVMPHVLSDFHKVDLEWFEPMTEAVCKALPFLLAGDDERFQTEVMRLAPAPKHDPKQTARKGEA.

Residue Y14 coordinates tRNA. Residue H19 is the Proton acceptor of the active site. TRNA-binding residues include F68, N70, and N116.

Belongs to the PTH family. In terms of assembly, monomer.

It is found in the cytoplasm. The catalysed reaction is an N-acyl-L-alpha-aminoacyl-tRNA + H2O = an N-acyl-L-amino acid + a tRNA + H(+). Functionally, hydrolyzes ribosome-free peptidyl-tRNAs (with 1 or more amino acids incorporated), which drop off the ribosome during protein synthesis, or as a result of ribosome stalling. Catalyzes the release of premature peptidyl moieties from peptidyl-tRNA molecules trapped in stalled 50S ribosomal subunits, and thus maintains levels of free tRNAs and 50S ribosomes. This chain is Peptidyl-tRNA hydrolase, found in Hyphomonas neptunium (strain ATCC 15444).